Here is a 101-residue protein sequence, read N- to C-terminus: Small ribosomal subunit protein uS14 (101 aa).

Belongs to the universal ribosomal protein uS14 family. In terms of assembly, part of the 30S ribosomal subunit. Contacts proteins S3 and S10.

In terms of biological role, binds 16S rRNA, required for the assembly of 30S particles and may also be responsible for determining the conformation of the 16S rRNA at the A site. This chain is Small ribosomal subunit protein uS14, found in Methylococcus capsulatus (strain ATCC 33009 / NCIMB 11132 / Bath).